A 48-amino-acid chain; its full sequence is Large ribosomal subunit protein eL40 (48 aa).

It belongs to the eukaryotic ribosomal protein eL40 family.

The chain is Large ribosomal subunit protein eL40 from Methanosphaera stadtmanae (strain ATCC 43021 / DSM 3091 / JCM 11832 / MCB-3).